The sequence spans 300 residues: MAAAAGDADDEPRSGHSSSEGECAVAPEPLTDAEGLFSFADFGSALGGGGAGLSGRASGGAQSPLRYLHVLWQQDAEPRDELRCKIPAGRLRRAARPHRRLGPTGKEVHALKRLRDSANANDVETVQQLLEDGADPCAADDKGRTALHFASCNGNDQIVQLLLDHGADPNQRDGLGNTPLHLAACTNHVPVITTLLRGGARVDALDRAGRTPLHLAKSKLNILQEGHAQCLEAVRLEVKQIIHMLREYLERLGQHEQRERLDDLCTRLQMTSTKEQVDEVTDLLASFTSLSLQMQSMEKR.

Residues 1–27 form a disordered region; sequence MAAAAGDADDEPRSGHSSSEGECAVAP. N-acetylalanine is present on A2. S58 and S63 each carry phosphoserine. A Nuclear localization signal (NLS) motif is present at residues 99-117; sequence RRLGPTGKEVHALKRLRDS. ANK repeat units lie at residues 109–138, 142–171, 175–204, and 208–244; these read HALK…DPCA, KGRT…DPNQ, LGNT…RVDA, and AGRT…IIHM. An LYN-binding region spans residues 141 to 241; that stretch reads DKGRTALHFA…EAVRLEVKQI (101 aa). The Nuclear export signal (NES) motif lies at 283–293; it reads LLASFTSLSLQ.

Interacts (via ankyrin repeat region) with LYN (via SH3-domain) in an activation-independent status of LYN. Forms a multiprotein complex with LYN and HCLS1. Interacts with TSN2, VAV1, DBNL and LASP1.

The protein localises to the nucleus. The protein resides in the cytoplasm. It localises to the midbody. In terms of biological role, plays an important role in regulating intracellular signaling events associated with erythroid terminal differentiation. This chain is Ankyrin repeat domain-containing protein 54 (ANKRD54), found in Homo sapiens (Human).